We begin with the raw amino-acid sequence, 213 residues long: Insulin-like peptide INSL6 (213 aa).

Residues M1–S20 form the signal peptide. 3 disulfides stabilise this stretch: C33–C179, C45–C192, and C178–C183. Positions F55–Q168 are cleaved as a propeptide — connecting peptide. Positions L201 to Y213 are excised as a propeptide.

This sequence belongs to the insulin family. Testis specific.

The protein localises to the secreted. Functionally, may have a role in sperm development and fertilization. In Homo sapiens (Human), this protein is Insulin-like peptide INSL6 (INSL6).